The sequence spans 434 residues: Zinc finger protein Pegasus (434 aa).

Residues 33–57 (VSSDKEAETLQGAGTDSDQNGLDHP) are disordered. C2H2-type zinc fingers lie at residues 82–104 (LKCR…IRIH), 110–132 (HRCH…MRSH), and 138–161 (YKCE…RRKH). Polar residues predominate over residues 260–274 (GQLSSLPPDTQNPAS). A disordered region spans residues 260 to 357 (GQLSSLPPDT…PSTPAPALPA (98 aa)). The span at 296 to 313 (CASAVSTSVAQSSSPASP) shows a compositional bias: low complexity. A compositionally biased stretch (polar residues) spans 337-349 (RTSTPSISNSQPS). 2 C2H2-type zinc fingers span residues 364–386 (HHCQ…MGCH) and 392–419 (FQCN…CCQH).

It belongs to the Ikaros C2H2-type zinc-finger protein family. In terms of assembly, probably self-associates.

The protein localises to the nucleus. Transcriptional repressor that binds the core 5'GNNTGTNG-3' DNA consensus sequence. This chain is Zinc finger protein Pegasus (ikzf5), found in Xenopus tropicalis (Western clawed frog).